We begin with the raw amino-acid sequence, 113 residues long: TYRO protein tyrosine kinase-binding protein (113 aa).

The signal sequence occupies residues 1 to 21 (MGGLEPCSRLLLLPLLLAVSG). The Extracellular segment spans residues 22–40 (LRPVQAQAQSDCSCSTVSP). Residues 41-61 (GVLAGIVMGDLVLTVLIALAV) form a helical membrane-spanning segment. Aspartate 50 is a Ca(2+) binding site. The Cytoplasmic portion of the chain corresponds to 62-113 (YFLGRLVPRGRGAAEAATRKQRITETESPYQELQGQRSDVYSDLNTQRPYYK). Residues 75–113 (AEAATRKQRITETESPYQELQGQRSDVYSDLNTQRPYYK) form a disordered region. The ITAM domain occupies 80-108 (RKQRITETESPYQELQGQRSDVYSDLNTQ). The span at 87 to 113 (TESPYQELQGQRSDVYSDLNTQRPYYK) shows a compositional bias: polar residues. Phosphotyrosine is present on residues tyrosine 91 and tyrosine 102.

This sequence belongs to the TYROBP family. As to quaternary structure, homodimer; disulfide-linked. Homotrimer; disulfide-linked. Homotetramer; disulfide-linked. Homotrimers and homotetramers form when low levels of partner receptors are available and are competitive with assembly with interacting receptors. They may represent alternative oligomerization states or may be intermediates in the receptor assembly process. Binding of a metal cation aids in homooligomerization through coordination of the metal ion by the subunits of the oligomer. Interacts with TREM1. Interacts with TREM2. Interacts with SIRPB1. Interacts with CLECSF5. Interacts with SIGLEC14. Interacts with CD300LB and CD300E. Interacts with CD300C2. Interacts (via ITAM domain) with SYK (via SH2 domains); activates SYK mediating neutrophil and macrophage integrin-mediated activation. Interacts with KLRC2, KIR2DS3 and KIR2DS5. Interacts with CD300H. Interacts with KIR2DS1. Interacts with KLRD1. Interacts with SIGLEC1. Following ligand binding by associated receptors, tyrosine phosphorylated in the ITAM domain which leads to activation of additional tyrosine kinases and subsequent cell activation. Expressed at low levels in the early development of the hematopoietic system and in the promonocytic stage and at high levels in mature monocytes. Expressed in hematological cells and tissues such as peripheral blood leukocytes and spleen. Also found in bone marrow, lymph nodes, placenta, lung and liver. Expressed at lower levels in different parts of the brain especially in the basal ganglia and corpus callosum.

It localises to the cell membrane. Its function is as follows. Adapter protein which non-covalently associates with activating receptors found on the surface of a variety of immune cells to mediate signaling and cell activation following ligand binding by the receptors. TYROBP is tyrosine-phosphorylated in the ITAM domain following ligand binding by the associated receptors which leads to activation of additional tyrosine kinases and subsequent cell activation. Also has an inhibitory role in some cells. Non-covalently associates with activating receptors of the CD300 family to mediate cell activation. Also mediates cell activation through association with activating receptors of the CD200R family. Required for neutrophil activation mediated by integrin. Required for the activation of myeloid cells mediated by the CLEC5A/MDL1 receptor. Associates with natural killer (NK) cell receptors such as KIR2DS2 and the KLRD1/KLRC2 heterodimer to mediate NK cell activation. Also enhances trafficking and cell surface expression of NK cell receptors KIR2DS1, KIR2DS2 and KIR2DS4 and ensures their stability at the cell surface. Associates with SIRPB1 to mediate activation of myeloid cells such as monocytes and dendritic cells. Associates with TREM1 to mediate activation of neutrophils and monocytes. Associates with TREM2 on monocyte-derived dendritic cells to mediate up-regulation of chemokine receptor CCR7 and dendritic cell maturation and survival. Association with TREM2 mediates cytokine-induced formation of multinucleated giant cells which are formed by the fusion of macrophages. Stabilizes the TREM2 C-terminal fragment (TREM2-CTF) produced by TREM2 ectodomain shedding which suppresses the release of pro-inflammatory cytokines. In microglia, required with TREM2 for phagocytosis of apoptotic neurons. Required with ITGAM/CD11B in microglia to control production of microglial superoxide ions which promote the neuronal apoptosis that occurs during brain development. Promotes pro-inflammatory responses in microglia following nerve injury which accelerates degeneration of injured neurons. Positively regulates the expression of the IRAK3/IRAK-M kinase and IL10 production by liver dendritic cells and inhibits their T cell allostimulatory ability. Negatively regulates B cell proliferation. Required for CSF1-mediated osteoclast cytoskeletal organization. Positively regulates multinucleation during osteoclast development. This Homo sapiens (Human) protein is TYRO protein tyrosine kinase-binding protein.